We begin with the raw amino-acid sequence, 561 residues long: Potassium-transporting ATPase potassium-binding subunit (561 aa).

Helical transmembrane passes span 4–24 (IIMQ…PLGI), 65–85 (AGSV…VLML), 134–154 (GLTV…FAVI), 177–197 (LYIL…QGVV), 253–273 (FTNL…VVMF), 285–305 (AIMT…TISE), 380–400 (GLYG…LLVG), 417–437 (MVCL…AFAV), 484–504 (MVGA…ALYL), and 528–548 (FIGL…LPAL).

Belongs to the KdpA family. The system is composed of three essential subunits: KdpA, KdpB and KdpC.

It is found in the cell membrane. Functionally, part of the high-affinity ATP-driven potassium transport (or Kdp) system, which catalyzes the hydrolysis of ATP coupled with the electrogenic transport of potassium into the cytoplasm. This subunit binds the extracellular potassium ions and delivers the ions to the membrane domain of KdpB through an intramembrane tunnel. The polypeptide is Potassium-transporting ATPase potassium-binding subunit (Listeria welshimeri serovar 6b (strain ATCC 35897 / DSM 20650 / CCUG 15529 / CIP 8149 / NCTC 11857 / SLCC 5334 / V8)).